The sequence spans 337 residues: Ketol-acid reductoisomerase (NADP(+)) (337 aa).

The region spanning 3–183 (VEMFYDDDAD…GGTRAGVIKT (181 aa)) is the KARI N-terminal Rossmann domain. Residues 26 to 29 (YGSQ), Ser-52, Ser-54, and 84 to 87 (DTAQ) each bind NADP(+). The active site involves His-109. Gly-135 provides a ligand contact to NADP(+). One can recognise a KARI C-terminal knotted domain in the interval 184–329 (TFKEETETDL…AKLRGLMSWV (146 aa)). The Mg(2+) site is built by Asp-192, Glu-196, Glu-228, and Glu-232. Ser-253 contacts substrate.

This sequence belongs to the ketol-acid reductoisomerase family. Requires Mg(2+) as cofactor.

The enzyme catalyses (2R)-2,3-dihydroxy-3-methylbutanoate + NADP(+) = (2S)-2-acetolactate + NADPH + H(+). The catalysed reaction is (2R,3R)-2,3-dihydroxy-3-methylpentanoate + NADP(+) = (S)-2-ethyl-2-hydroxy-3-oxobutanoate + NADPH + H(+). It participates in amino-acid biosynthesis; L-isoleucine biosynthesis; L-isoleucine from 2-oxobutanoate: step 2/4. It functions in the pathway amino-acid biosynthesis; L-valine biosynthesis; L-valine from pyruvate: step 2/4. In terms of biological role, involved in the biosynthesis of branched-chain amino acids (BCAA). Catalyzes an alkyl-migration followed by a ketol-acid reduction of (S)-2-acetolactate (S2AL) to yield (R)-2,3-dihydroxy-isovalerate. In the isomerase reaction, S2AL is rearranged via a Mg-dependent methyl migration to produce 3-hydroxy-3-methyl-2-ketobutyrate (HMKB). In the reductase reaction, this 2-ketoacid undergoes a metal-dependent reduction by NADPH to yield (R)-2,3-dihydroxy-isovalerate. This Nocardia farcinica (strain IFM 10152) protein is Ketol-acid reductoisomerase (NADP(+)).